Here is a 226-residue protein sequence, read N- to C-terminus: UPF0173 metal-dependent hydrolase Msed_2125 (226 aa).

Belongs to the UPF0173 family.

The chain is UPF0173 metal-dependent hydrolase Msed_2125 from Metallosphaera sedula (strain ATCC 51363 / DSM 5348 / JCM 9185 / NBRC 15509 / TH2).